The primary structure comprises 144 residues: MTMSPCPLLLVFVLGLVVIPPTLAQNERYEKFLRQHYDAKPNGRDDRYCESMMKERKLTSPCKDVNTFIHGTKKNIRAICGKKGSPYGENFRISNSPFQITTCTHSGASPRPPCGYRAFKDFRYIVIACEDGWPVHFDESFISP.

Positions 1 to 24 (MTMSPCPLLLVFVLGLVVIPPTLA) are cleaved as a signal peptide. Histidine 36 (proton acceptor) is an active-site residue. 3 disulfides stabilise this stretch: cysteine 49/cysteine 103, cysteine 62/cysteine 114, and cysteine 80/cysteine 129. Residues 54–58 (KERKL) carry the Nucleolar localization signal motif. Histidine 136 (proton donor) is an active-site residue.

It belongs to the pancreatic ribonuclease family. Detected in small intestine, caecum and colon, with the highest expression in Paneth cells in the intestinal epithelium.

The protein localises to the secreted. The protein resides in the cytoplasmic vesicle. Its subcellular location is the secretory vesicle lumen. It is found in the nucleus. It localises to the nucleolus. Has bactericidal activity against E.faecalis and L.monocytogenes, but not against L.innocua and E.coli. Promotes angiogenesis (in vitro). Has low ribonuclease activity (in vitro). Promotes proliferation of melanoma cells, but not of endothelial cells or fibroblasts (in vitro). The sequence is that of Angiogenin-4 (Ang4) from Mus musculus (Mouse).